The primary structure comprises 271 residues: Carboxy-terminal domain RNA polymerase II polypeptide A small phosphatase 2 (271 aa).

Residue Ser5 is modified to Phosphoserine. In terms of domain architecture, FCP1 homology spans 97 to 255 (EDQGRICVVI…LNLIPIFEEL (159 aa)). The 4-aspartylphosphate intermediate role is filled by Asp107. 3 residues coordinate Mg(2+): Asp107, Asp109, and Asn218. The active-site Proton donor is Asp109.

Monomer. Interacts with REST. Requires Mg(2+) as cofactor. As to expression, expression is restricted to non-neuronal tissues. Highest expression in pancreas and lowest in liver.

It localises to the nucleus. The catalysed reaction is O-phospho-L-seryl-[protein] + H2O = L-seryl-[protein] + phosphate. It catalyses the reaction O-phospho-L-threonyl-[protein] + H2O = L-threonyl-[protein] + phosphate. Functionally, preferentially catalyzes the dephosphorylation of 'Ser-5' within the tandem 7 residue repeats in the C-terminal domain (CTD) of the largest RNA polymerase II subunit POLR2A. Negatively regulates RNA polymerase II transcription, possibly by controlling the transition from initiation/capping to processive transcript elongation. Recruited by REST to neuronal genes that contain RE-1 elements, leading to neuronal gene silencing in non-neuronal cells. May contribute to the development of sarcomas. The protein is Carboxy-terminal domain RNA polymerase II polypeptide A small phosphatase 2 (CTDSP2) of Homo sapiens (Human).